The sequence spans 300 residues: Mycothiol acetyltransferase (300 aa).

2 N-acetyltransferase domains span residues 4–140 and 151–300; these read IDWR…RPLT and VRLA…AVAD. Aspartate 36 contacts 1D-myo-inositol 2-(L-cysteinylamino)-2-deoxy-alpha-D-glucopyranoside. Position 79-81 (79-81) interacts with acetyl-CoA; it reads LVV. Glutamate 178, lysine 219, and glutamate 227 together coordinate 1D-myo-inositol 2-(L-cysteinylamino)-2-deoxy-alpha-D-glucopyranoside. 231–233 is a binding site for acetyl-CoA; that stretch reads VGV. Tyrosine 269 provides a ligand contact to 1D-myo-inositol 2-(L-cysteinylamino)-2-deoxy-alpha-D-glucopyranoside. Position 274–279 (274–279) interacts with acetyl-CoA; the sequence is NGAAVK.

Belongs to the acetyltransferase family. MshD subfamily. Monomer.

The enzyme catalyses 1D-myo-inositol 2-(L-cysteinylamino)-2-deoxy-alpha-D-glucopyranoside + acetyl-CoA = mycothiol + CoA + H(+). In terms of biological role, catalyzes the transfer of acetyl from acetyl-CoA to desacetylmycothiol (Cys-GlcN-Ins) to form mycothiol. This Mycobacterium sp. (strain MCS) protein is Mycothiol acetyltransferase.